Here is a 527-residue protein sequence, read N- to C-terminus: F-box-like/WD repeat-containing protein TBL1X (527 aa).

S2 bears the N-acetylserine mark. The region spanning 4-36 (TSDEVNFLVYRYLQESGFSHSAFTFGIESHISQ) is the LisH domain. Residues 41–86 (GTLVPPAALISILQKGLQYVEAEISINEDGTVFDGRPIESLSLIDA) form the F-box-like domain. K102 bears the N6-acetyllysine mark. The segment at 127–164 (TTPAAAAQQNPPKNGEATVNGEENGAHAINNHSKPMEI) is disordered. WD repeat units follow at residues 180–219 (GHESEVFICAWNPVSDLLASGSGDSTARIWNLNENSNGGS), 236–275 (PSNKDVTSLDWNSDGTLLATGSYDGFARIWTEDGNLASTL), 277–316 (QHKGPIFALKWNKKGNYILSAGVDKTTIIWDAHTGEAKQQ), 319–359 (FHSA…KTFQ), 360–399 (GHTNEVNAIKWDPSGMLLASCSDDMTLKIWSMKQDACVHD), 402–450 (AHSK…CIHT), 453–492 (KHQEPVYSVAFSPDGKYLASGSFDKCVHIWNTQSGSLVHS), and 494–526 (RGTGGIFEVCWNARGDKVGASASDGSVCVLDLR). Residue K290 forms a Glycyl lysine isopeptide (Lys-Gly) (interchain with G-Cter in SUMO2) linkage.

Belongs to the WD repeat EBI family. Homotetramer; dimer of dimers. Component of the N-Cor repressor complex, at least composed of NCOR1, NCOR2, HDAC3, TBL1X, TBL1R, CORO2A and GPS2. Component of a E3 ubiquitin ligase complex containing UBE2D1, SIAH1, CACYBP/SIP, SKP1, APC and TBL1X. Interacts with GPS2 (when sumoylated); leading to protect GPS2 against degradation by the proteasome. Probably part of other corepressor complexes, that do not contain NCOR1 and NCOR2. Interacts with histones H2B, H3a and H4. Interacts with MECP2; recruits TBL1X to the heterochromatin foci. Interacts with USP44. Expressed in the cochlea.

Its subcellular location is the nucleus. F-box-like protein involved in the recruitment of the ubiquitin/19S proteasome complex to nuclear receptor-regulated transcription units. Plays an essential role in transcription activation mediated by nuclear receptors. Probably acts as integral component of corepressor complexes that mediates the recruitment of the 19S proteasome complex, leading to the subsequent proteasomal degradation of transcription repressor complexes, thereby allowing cofactor exchange. This is F-box-like/WD repeat-containing protein TBL1X (Tbl1x) from Mus musculus (Mouse).